Here is a 423-residue protein sequence, read N- to C-terminus: p-aminobenzoyl-glutamate hydrolase subunit A homolog (423 aa).

Belongs to the peptidase M20 family. Mn(2+) serves as cofactor.

Its function is as follows. Catalyzes the cleavage of p-aminobenzoyl-glutamate (PABA-GLU) to form p-aminobenzoate (PABA) and glutamate. The polypeptide is p-aminobenzoyl-glutamate hydrolase subunit A homolog (abgA) (Haemophilus influenzae (strain ATCC 51907 / DSM 11121 / KW20 / Rd)).